The primary structure comprises 142 residues: Large ribosomal subunit protein uL11 (142 aa).

The protein belongs to the universal ribosomal protein uL11 family. As to quaternary structure, part of the ribosomal stalk of the 50S ribosomal subunit. Interacts with L10 and the large rRNA to form the base of the stalk. L10 forms an elongated spine to which L12 dimers bind in a sequential fashion forming a multimeric L10(L12)X complex. Post-translationally, one or more lysine residues are methylated.

Functionally, forms part of the ribosomal stalk which helps the ribosome interact with GTP-bound translation factors. This Shewanella sp. (strain ANA-3) protein is Large ribosomal subunit protein uL11.